We begin with the raw amino-acid sequence, 81 residues long: Sulfur carrier protein TusA (81 aa).

The active-site Cysteine persulfide intermediate is C19.

This sequence belongs to the sulfur carrier protein TusA family. In terms of assembly, interacts with IscS.

Its subcellular location is the cytoplasm. It functions in the pathway tRNA modification. Sulfur carrier protein involved in sulfur trafficking in the cell. Part of a sulfur-relay system required for 2-thiolation during synthesis of 2-thiouridine of the modified wobble base 5-methylaminomethyl-2-thiouridine (mnm(5)s(2)U) in tRNA. Interacts with IscS and stimulates its cysteine desulfurase activity. Accepts an activated sulfur from IscS, which is then transferred to TusD, and thus determines the direction of sulfur flow from IscS to 2-thiouridine formation. Also appears to be involved in sulfur transfer for the biosynthesis of molybdopterin. The polypeptide is Sulfur carrier protein TusA (Klebsiella pneumoniae subsp. pneumoniae (strain ATCC 700721 / MGH 78578)).